Consider the following 893-residue polypeptide: Sulfate permease 2 (893 aa).

Residues Met1–Pro25 form a disordered region. Residues Met1 to His131 lie on the Cytoplasmic side of the membrane. A helical transmembrane segment spans residues Tyr132–Val152. Residues Pro153–Thr163 are Extracellular-facing. A helical transmembrane segment spans residues Leu164–Ala184. Topologically, residues Thr185–Asp188 are cytoplasmic. The chain crosses the membrane as a helical span at residues Val189–Thr209. The Extracellular segment spans residues Ala210–Gly221. The chain crosses the membrane as a helical span at residues Pro222–Leu242. Residues Arg243–Leu244 lie on the Cytoplasmic side of the membrane. The chain crosses the membrane as a helical span at residues Gly245–Phe265. Residues Asn266 to Asp305 lie on the Extracellular side of the membrane. A helical membrane pass occupies residues Ala306–Tyr326. Topologically, residues Gly327–Phe350 are cytoplasmic. The chain crosses the membrane as a helical span at residues Tyr351 to Ile371. The Extracellular portion of the chain corresponds to Thr372 to His399. Residues Val400–Leu420 traverse the membrane as a helical segment. Topologically, residues Leu421–Glu443 are cytoplasmic. Residues Leu444 to Gly464 form a helical membrane-spanning segment. Over Ser465–Gly483 the chain is Extracellular. The chain crosses the membrane as a helical span at residues Leu484–Ile504. The Cytoplasmic segment spans residues Pro505–Lys532. Residues Met533–Ala551 traverse the membrane as a helical segment. The Extracellular portion of the chain corresponds to Ser552–Phe559. Residues Ala560–Leu580 traverse the membrane as a helical segment. Residues Gly581–Ile893 are Cytoplasmic-facing. In terms of domain architecture, STAS spans Asp676–His854.

This sequence belongs to the SLC26A/SulP transporter (TC 2.A.53) family.

The protein localises to the membrane. Functionally, high affinity uptake of sulfate into the cell. In Saccharomyces cerevisiae (strain ATCC 204508 / S288c) (Baker's yeast), this protein is Sulfate permease 2 (SUL2).